The following is a 351-amino-acid chain: sn-1 oleoyl-lipid 12-desaturase (351 aa).

The next 2 helical transmembrane spans lie at 46–66 (WASVLITLGAIAVGYLGIIYL) and 68–88 (WYCLPITWIWTGTALTGAFVV). The Histidine box-1 signature appears at 90 to 94 (HDCGH). Residues 102–122 (WVNDLVGHIAFAPLIYPFHSW) form a helical membrane-spanning segment. Positions 126 to 130 (HDHHH) match the Histidine box-2 motif. 2 consecutive transmembrane segments (helical) span residues 199 to 219 (IAVVFLFAAIAFPALIITTGV) and 222 to 242 (FVKFWLMPWLVYHFWMSTFTI). Residues 290–294 (HHLSV) carry the Histidine box-3 motif.

It belongs to the fatty acid desaturase type 2 family. Requires Fe(2+) as cofactor.

It localises to the membrane. The enzyme catalyses a 1-[(9Z)-octadecenoyl]-2-acyl-glycerolipid + 2 reduced [2Fe-2S]-[ferredoxin] + O2 + 2 H(+) = a 1-[(9Z,12Z)-octadecdienoyl]-2-acyl-glycerolipid + 2 oxidized [2Fe-2S]-[ferredoxin] + 2 H2O. Its pathway is lipid metabolism; polyunsaturated fatty acid biosynthesis. Desaturase involved in fatty acid biosynthesis. Introduces a double bond at carbon 12 of oleoyl groups (18:1) attached to the sn-1 position of the glycerol moiety of membrane glycerolipids. This enzyme is involved in chilling tolerance because the phase transition temperature of lipids of cellular membranes depends on the degree of unsaturation of fatty acids of the membrane lipids. This chain is sn-1 oleoyl-lipid 12-desaturase, found in Synechocystis sp. (strain ATCC 27184 / PCC 6803 / Kazusa).